An 865-amino-acid polypeptide reads, in one-letter code: Bifunctional uridylyltransferase/uridylyl-removing enzyme (865 aa).

The segment at 1 to 318 (MPHVDLNPLK…FPRPDSDARL (318 aa)) is uridylyltransferase. A uridylyl-removing region spans residues 319–675 (IDDDFRNLRE…VRPTEHGEGL (357 aa)). One can recognise an HD domain in the interval 437–559 (VDQHTLAVVR…VGDERRLAAL (123 aa)). ACT domains lie at 676–762 (QVMV…RLPH) and 789–865 (RLSV…QQAA). Residues 747–767 (DPHAARHAHAPRRLPHSHARR) form a disordered region. Basic residues predominate over residues 751-767 (ARHAHAPRRLPHSHARR).

It belongs to the GlnD family. Mg(2+) is required as a cofactor.

The catalysed reaction is [protein-PII]-L-tyrosine + UTP = [protein-PII]-uridylyl-L-tyrosine + diphosphate. It carries out the reaction [protein-PII]-uridylyl-L-tyrosine + H2O = [protein-PII]-L-tyrosine + UMP + H(+). Its activity is regulated as follows. Uridylyltransferase (UTase) activity is inhibited by glutamine, while glutamine activates uridylyl-removing (UR) activity. Its function is as follows. Modifies, by uridylylation and deuridylylation, the PII regulatory proteins (GlnB and homologs), in response to the nitrogen status of the cell that GlnD senses through the glutamine level. Under low glutamine levels, catalyzes the conversion of the PII proteins and UTP to PII-UMP and PPi, while under higher glutamine levels, GlnD hydrolyzes PII-UMP to PII and UMP (deuridylylation). Thus, controls uridylylation state and activity of the PII proteins, and plays an important role in the regulation of nitrogen assimilation and metabolism. The protein is Bifunctional uridylyltransferase/uridylyl-removing enzyme of Bordetella pertussis (strain Tohama I / ATCC BAA-589 / NCTC 13251).